The following is a 226-amino-acid chain: Leucyl/phenylalanyl-tRNA--protein transferase (226 aa).

It belongs to the L/F-transferase family.

The protein localises to the cytoplasm. It carries out the reaction N-terminal L-lysyl-[protein] + L-leucyl-tRNA(Leu) = N-terminal L-leucyl-L-lysyl-[protein] + tRNA(Leu) + H(+). The catalysed reaction is N-terminal L-arginyl-[protein] + L-leucyl-tRNA(Leu) = N-terminal L-leucyl-L-arginyl-[protein] + tRNA(Leu) + H(+). The enzyme catalyses L-phenylalanyl-tRNA(Phe) + an N-terminal L-alpha-aminoacyl-[protein] = an N-terminal L-phenylalanyl-L-alpha-aminoacyl-[protein] + tRNA(Phe). In terms of biological role, functions in the N-end rule pathway of protein degradation where it conjugates Leu, Phe and, less efficiently, Met from aminoacyl-tRNAs to the N-termini of proteins containing an N-terminal arginine or lysine. This is Leucyl/phenylalanyl-tRNA--protein transferase from Pseudomonas fluorescens (strain ATCC BAA-477 / NRRL B-23932 / Pf-5).